Reading from the N-terminus, the 216-residue chain is uncharacterized protein (216 aa).

This is an uncharacterized protein from Methylophilus leisingeri (strain DSM 6813 / VKM B-2013 / DM11).